We begin with the raw amino-acid sequence, 756 residues long: Rab11 family-interacting protein 3 (756 aa).

A compositionally biased stretch (pro residues) spans 1 to 24 (MASAPPASPPGSEPPGPDPEPGGP). The interval 1 to 204 (MASAPPASPP…SEPVGSQEDG (204 aa)) is disordered. The interval 2 to 435 (ASAPPASPPG…RLSSKKVARY (434 aa)) is important for binding to DYNC1LI1. The segment covering 27 to 39 (PGAAQLAPGPAEL) has biased composition (low complexity). The residue at position 52 (S52) is a Phosphoserine. A compositionally biased stretch (low complexity) spans 53 to 68 (PGLDEPAPGAAADGGA). Pro residues predominate over residues 84–94 (DPGPSAPPPRS). S102 carries the phosphoserine; by CDK1 modification. 2 EF-hand domains span residues 202–237 (EDGPRLRAVFDALDGDGDGFVRIEDFIQFATVYGAE) and 234–269 (YGAEQVKDLTKYLDPSGLGVISFEDFYQGITAIRNG). D215, D217, D219, D226, D247, S249, and D258 together coordinate Ca(2+). 6 positions are modified to phosphoserine: S281, S348, S488, S538, S647, and S648. The tract at residues 484-588 (GEQHSRLRQE…LLDEIESLTL (105 aa)) is ARF-binding domain (ABD). A coiled-coil region spans residues 485 to 694 (EQHSRLRQEN…NGQIITLSIQ (210 aa)). Residues 645–664 (RSSSMGLQEYHSRARESELE) are disordered. A compositionally biased stretch (basic and acidic residues) spans 654 to 664 (YHSRARESELE). One can recognise an FIP-RBD domain in the interval 694–756 (QGAKSLFSTA…ETNPSILEVK (63 aa)).

Homodimer. Interacts with RAB11A; the interaction is direct and is required for the recruitment to endosomes. Interacts with RAB11B. Forms a ternary complex with RAB11A and dynein intermediate chain DYNC1LI1; RAB11FIP3 links RAB11A to dynein and the interaction regulates endocytic trafficking. Interacts with dynein intermediate chain and dynactin (DCTN1); the interaction activates dynein processivity. Interacts with ARF6 and EXOC7; the interaction serves for recruitment and tethering of recycling endosomes-derived vesicles to the cleavage furrow/midbody. Interacts with RACGAP1/MgcRacGAP; the interaction occurs at late telophase and is required for recruitment and tethering of recycling endosomes-derived vesicles to the cleavage furrow/midbody. Forms a complex with RAB11A and Rabin8/RAB3IP, probably a heterohexamer with two of each protein subunit, where RAB3IP and RAB11FIP3 simultaneously bind to RAB11A; the complex promotes preciliary trafficking. Forms a complex containing RAB11A, ASAP1, RAB3IP, RAP11FIP3 and ARF4; the complex promotes preciliary trafficking; the complex binds to RHO in photoreceptor cells and promotes RHO ciliary transport. Interacts with RAB11FIP4. Interacts with RAB25. In terms of processing, phosphorylated at Ser-102 by CDK1 during metaphase, and dephosphorylated as cells enter telophase.

It localises to the endosome membrane. The protein localises to the recycling endosome membrane. It is found in the cytoplasm. Its subcellular location is the cytoskeleton. The protein resides in the microtubule organizing center. It localises to the centrosome. The protein localises to the cleavage furrow. It is found in the midbody. Its subcellular location is the golgi apparatus membrane. The protein resides in the golgi apparatus. It localises to the trans-Golgi network membrane. Its function is as follows. Downstream effector molecule for Rab11 GTPase which is involved in endocytic trafficking, cytokinesis and intracellular ciliogenesis by participating in membrane delivery. Recruited by Rab11 to endosomes where it links Rab11 to dynein motor complex. The functional Rab11-RAB11FIP3-dynein complex regulates the movement of peripheral sorting endosomes (SE) along microtubule tracks toward the microtubule organizing center/centrosome, generating the endocytic recycling compartment (ERC) during interphase of cell cycle. Facilitates the interaction between dynein and dynactin and activates dynein processivity. Binding with ASAP1 is needed to regulate the pericentrosomal localization of recycling endosomes. The Rab11-RAB11FIP3 complex is also implicated in the transport during telophase of vesicles derived from recycling endosomes to the cleavage furrow via centrosome-anchored microtubules, where the vesicles function to deliver membrane during late cytokinesis and abscission. The recruitment of Rab11-RAB11FIP3-containing endosomes to the cleavage furrow and tethering to the midbody is co-mediated by RAB11FIP3 interaction with ARF6-exocyst and RACGAP1-MKLP1 tethering complexes. Also involved in the Rab11-Rabin8-Rab8 ciliogenesis cascade by facilitating the orderly assembly of a ciliary targeting complex containing Rab11, ASAP1, Rabin8/RAB3IP, RAB11FIP3 and ARF4, which directs preciliary vesicle trafficking to mother centriole and ciliogenesis initiation. Also promotes the activity of Rab11 and ASAP1 in the ARF4-dependent Golgi-to-cilia transport of the sensory receptor rhodopsin. Competes with WDR44 for binding to Rab11, which controls intracellular ciliogenesis pathway. May play a role in breast cancer cell motility by regulating actin cytoskeleton. This is Rab11 family-interacting protein 3 from Homo sapiens (Human).